The following is a 122-amino-acid chain: Small ribosomal subunit protein uS13 (122 aa).

A disordered region spans residues 97-122 (PVRGQRTHTNARTRKGPAKAIAGKKK).

Belongs to the universal ribosomal protein uS13 family. In terms of assembly, part of the 30S ribosomal subunit. Forms a loose heterodimer with protein S19. Forms two bridges to the 50S subunit in the 70S ribosome.

Its function is as follows. Located at the top of the head of the 30S subunit, it contacts several helices of the 16S rRNA. In the 70S ribosome it contacts the 23S rRNA (bridge B1a) and protein L5 of the 50S subunit (bridge B1b), connecting the 2 subunits; these bridges are implicated in subunit movement. Contacts the tRNAs in the A and P-sites. The chain is Small ribosomal subunit protein uS13 from Bartonella quintana (strain Toulouse) (Rochalimaea quintana).